The following is a 622-amino-acid chain: Serine/threonine-protein kinase MAK (622 aa).

In terms of domain architecture, Protein kinase spans 4–284; sequence YTTMKQLGDG…ASQALKHPYF (281 aa). ATP is bound by residues 10 to 18 and lysine 33; that span reads LGDGTYGSV. The active-site Proton acceptor is aspartate 125. Threonine 157 is modified (phosphothreonine; by autocatalysis). A Phosphotyrosine; by autocatalysis modification is found at tyrosine 159. Residues 301–371 form a disordered region; the sequence is QTLHKQLQPL…QGHQKPPQTM (71 aa). Polar residues predominate over residues 336 to 355; the sequence is QPKQGHQPLQTIQPPQNTVT.

This sequence belongs to the protein kinase superfamily. CMGC Ser/Thr protein kinase family. CDC2/CDKX subfamily. Interacts with AR and CDK20. Found in a complex containing MAK, AR and NCOA3. Interacts with FZR1 (via WD repeats). Interacts with RP1. Mg(2+) is required as a cofactor. Post-translationally, autophosphorylated. Phosphorylated on serine and threonine residues. In pre- and postmeiotic male germ cells in testis. In photoreceptor cells of the retina and in the olfactory receptors, and in certain epithelia of the respiratory tract and choroid plexus (brain).

It localises to the nucleus. The protein resides in the cytoplasm. It is found in the cytoskeleton. Its subcellular location is the microtubule organizing center. The protein localises to the centrosome. It localises to the spindle. The protein resides in the midbody. It is found in the cell projection. Its subcellular location is the cilium. The protein localises to the photoreceptor outer segment. It localises to the photoreceptor inner segment. It catalyses the reaction L-seryl-[protein] + ATP = O-phospho-L-seryl-[protein] + ADP + H(+). It carries out the reaction L-threonyl-[protein] + ATP = O-phospho-L-threonyl-[protein] + ADP + H(+). In terms of biological role, essential for the regulation of ciliary length and required for the long-term survival of photoreceptors. Could have an important function in sensory cells and in spermatogenesis. May participate in signaling pathways used in visual and olfactory sensory transduction. Phosphorylates FZR1 in a cell cycle-dependent manner. Plays a role in the transcriptional coactivation of AR. The chain is Serine/threonine-protein kinase MAK (Mak) from Mus musculus (Mouse).